An 85-amino-acid chain; its full sequence is uncharacterized protein (85 aa).

Positions 35–85 (SDKDAPFSTQALTRSKSKRKRSALPVANGLKKPTRSIKRPSRGERLSATTI) are disordered.

This is an uncharacterized protein from Pasteurella multocida (strain Pm70).